A 424-amino-acid chain; its full sequence is Serine--tRNA ligase (424 aa).

230–232 (TAE) is a binding site for L-serine. Residue 261–263 (RSE) coordinates ATP. Residue Glu284 coordinates L-serine. An ATP-binding site is contributed by 348–351 (EISS). Ser384 lines the L-serine pocket.

Belongs to the class-II aminoacyl-tRNA synthetase family. Type-1 seryl-tRNA synthetase subfamily. Homodimer. The tRNA molecule binds across the dimer.

Its subcellular location is the cytoplasm. It carries out the reaction tRNA(Ser) + L-serine + ATP = L-seryl-tRNA(Ser) + AMP + diphosphate + H(+). It catalyses the reaction tRNA(Sec) + L-serine + ATP = L-seryl-tRNA(Sec) + AMP + diphosphate + H(+). The protein operates within aminoacyl-tRNA biosynthesis; selenocysteinyl-tRNA(Sec) biosynthesis; L-seryl-tRNA(Sec) from L-serine and tRNA(Sec): step 1/1. Functionally, catalyzes the attachment of serine to tRNA(Ser). Is also able to aminoacylate tRNA(Sec) with serine, to form the misacylated tRNA L-seryl-tRNA(Sec), which will be further converted into selenocysteinyl-tRNA(Sec). The chain is Serine--tRNA ligase from Nitratidesulfovibrio vulgaris (strain ATCC 29579 / DSM 644 / CCUG 34227 / NCIMB 8303 / VKM B-1760 / Hildenborough) (Desulfovibrio vulgaris).